We begin with the raw amino-acid sequence, 1832 residues long: Zinc finger SWIM domain-containing protein 8 (1832 aa).

Phosphoserine is present on residues Ser-36, Ser-48, and Ser-53. A disordered region spans residues 45–67 (RKQSAGPNSPTGGGGGGGSGGTR). Residues 55-65 (TGGGGGGGSGG) show a composition bias toward gly residues. The segment at 172 to 208 (YNVAVMFDRCRVTSCSCTCGAGAKWCTHVVALCLFRI) adopts an SWIM-type zinc-finger fold. Phosphoserine occurs at positions 437 and 564. 3 disordered regions span residues 516 to 722 (PGAS…VGEE), 800 to 821 (NPPD…VSTS), and 1018 to 1216 (SQTH…TVDV). The span at 563–572 (LSAEGGDKAL) shows a compositional bias: basic and acidic residues. A compositionally biased stretch (polar residues) spans 1021 to 1042 (HKPQTLSSFYSSSRPATANQRS). The segment covering 1121–1132 (SRGGYNGRGWGS) has biased composition (gly residues). Thr-1141 carries the post-translational modification Phosphothreonine. Polar residues predominate over residues 1146–1161 (IDSSAPETTSDSSPTL). A phosphoserine mark is found at Ser-1155, Ser-1158, and Ser-1162. Residues 1176 to 1211 (GRGQDSDSISSSSSDSLGSSSSSGSRRASASGGARA) are compositionally biased toward low complexity. Position 1270 is a phosphoserine (Ser-1270). Residues 1435 to 1446 (STAREGATSCSG) are compositionally biased toward polar residues. The disordered stretch occupies residues 1435–1465 (STAREGATSCSGSGMRAAGEAGRGLPEGRGA). Over residues 1455 to 1465 (AGRGLPEGRGA) the composition is skewed to gly residues. At Ser-1831 the chain carries Phosphoserine.

Belongs to the ZSWIM8 family. In terms of assembly, component of the SCF-like E3 ubiquitin-protein ligase complex which contains CUL3, RBX1, ELOB, ELOC and ZSWIM8. Interacts with DAB1.

The protein resides in the cytoplasm. It is found in the cytosol. Its pathway is protein modification; protein ubiquitination. Functionally, substrate recognition component of a SCF-like E3 ubiquitin-protein ligase complex that promotes target-directed microRNA degradation (TDMD), a process that mediates degradation of microRNAs (miRNAs). The SCF-like E3 ubiquitin-protein ligase complex acts by catalyzing ubiquitination and subsequent degradation of AGO proteins (AGO1, AGO2, AGO3 and/or AGO4), thereby exposing miRNAs for degradation. Specifically recognizes and binds AGO proteins when they are engaged with a TDMD target. May also acts as a regulator of axon guidance: specifically recognizes misfolded ROBO3 and promotes its ubiquitination and subsequent degradation. Plays an essential role for proper embryonic development of heart and lung. Controls protein quality of DAB1, a key signal molecule for brain development, thus protecting its signaling strength. Mechanistically, recognizes intrinsically disordered regions of DAB1 and eliminates misfolded DAB1 that cannot be properly phosphorylated. In Mus musculus (Mouse), this protein is Zinc finger SWIM domain-containing protein 8.